An 890-amino-acid chain; its full sequence is Protein FAM171A1 (890 aa).

The signal sequence occupies residues 1 to 21 (MSRSAALLLCLLGCHVWKAVT). The Extracellular portion of the chain corresponds to 22-303 (KTLREPGAGA…VTQDITTYHT (282 aa)). N-linked (GlcNAc...) asparagine glycans are attached at residues asparagine 190 and asparagine 194. A helical membrane pass occupies residues 304–324 (VFLLAILGGMAFILLVLLCLL). Residues 325–890 (LYYCRRKCMK…ERPLMAFNIK (566 aa)) lie on the Cytoplasmic side of the membrane. Phosphoserine occurs at positions 358, 360, 371, 422, 443, and 525. Disordered stretches follow at residues 730–759 (AGRN…RGDA) and 818–890 (EGSS…FNIK). Basic and acidic residues predominate over residues 747–757 (NEPKSARKGRG). The segment covering 822 to 833 (RRSGGQLPSLQE) has biased composition (polar residues). Serine 849 and serine 855 each carry phosphoserine. Positions 858 to 869 (EEEEDDDDDDQG) are enriched in acidic residues. A compositionally biased stretch (basic and acidic residues) spans 870 to 883 (EDKKSPWQKREERP).

The protein belongs to the FAM171 family. Interacts with ADAM10, NSG1 and OAZ1.

It is found in the cell membrane. Functionally, involved in the regulation of the cytoskeletal dynamics, plays a role in actin stress fiber formation. The protein is Protein FAM171A1 (FAM171A1) of Pongo abelii (Sumatran orangutan).